The primary structure comprises 436 residues: Tol-Pal system protein TolB (436 aa).

An N-terminal signal peptide occupies residues 1–28 (MEMLRRNFFRLLMVLVAGCGLIASPANA).

Belongs to the TolB family. The Tol-Pal system is composed of five core proteins: the inner membrane proteins TolA, TolQ and TolR, the periplasmic protein TolB and the outer membrane protein Pal. They form a network linking the inner and outer membranes and the peptidoglycan layer.

Its subcellular location is the periplasm. In terms of biological role, part of the Tol-Pal system, which plays a role in outer membrane invagination during cell division and is important for maintaining outer membrane integrity. This chain is Tol-Pal system protein TolB, found in Rhizobium meliloti (strain 1021) (Ensifer meliloti).